Here is a 309-residue protein sequence, read N- to C-terminus: Glutaminase (309 aa).

Residues Ser-64, Asn-114, Glu-160, Asn-167, Tyr-191, Tyr-243, and Val-261 each coordinate substrate.

Belongs to the glutaminase family. As to quaternary structure, homotetramer.

It carries out the reaction L-glutamine + H2O = L-glutamate + NH4(+). The sequence is that of Glutaminase from Methylobacterium sp. (strain 4-46).